A 695-amino-acid chain; its full sequence is Methionine synthase reductase (695 aa).

In terms of domain architecture, Flavodoxin-like spans 4–147; the sequence is FLLLYATQRG…VVEPWINGLW (144 aa). FMN contacts are provided by residues 10–14 and 93–124; these read TQRGQ and LLGL…QRFY. A hinge region spans residues 166–245; the sequence is TLTMASHASR…ASLNIPSLPP (80 aa). S171 and S187 each carry phosphoserine. The FAD-binding FR-type domain occupies 269 to 531; sequence DPVFHVPVSK…PRTTNSFHLP (263 aa). Position 289 (K289) interacts with NADP(+). FAD-binding positions include 449 to 452 and 485 to 488; these read RPYS and GVCT. Residues 608–609, 622–624, and D657 contribute to the NADP(+) site; these read SR and YVQ. W695 contacts FAD.

In terms of assembly, forms a multiprotein complex with MMACHC, MMADHC and MTR. FAD is required as a cofactor. FMN serves as cofactor.

It localises to the cytoplasm. It carries out the reaction 2 methylcob(III)alamin-[methionine synthase] + 2 S-adenosyl-L-homocysteine + NADP(+) + H(+) = 2 cob(II)alamin-[methionine synthase] + 2 S-adenosyl-L-methionine + NADPH. The enzyme catalyses 2 cob(II)alamin + A + 2 H2O + 2 H(+) = 2 aquacob(III)alamin + AH2. Functionally, key enzyme in methionine and folate homeostasis responsible for the reactivation of methionine synthase (MTR/MS) activity by catalyzing the reductive methylation of MTR-bound cob(II)alamin. Cobalamin (vitamin B12) forms a complex with MTR to serve as an intermediary in methyl transfer reactions that cycles between MTR-bound methylcob(III)alamin and MTR bound-cob(I)alamin forms, and occasional oxidative escape of the cob(I)alamin intermediate during the catalytic cycle leads to the inactive cob(II)alamin species. The processing of cobalamin in the cytosol occurs in a multiprotein complex composed of at least MMACHC, MMADHC, MTRR and MTR which may contribute to shuttle safely and efficiently cobalamin towards MTR in order to produce methionine. Also necessary for the utilization of methyl groups from the folate cycle, thereby affecting transgenerational epigenetic inheritance. Also acts as a molecular chaperone for methionine synthase by stabilizing apoMTR and incorporating methylcob(III)alamin into apoMTR to form the holoenzyme. Also serves as an aquacob(III)alamin reductase by reducing aquacob(III)alamin to cob(II)alamin; this reduction leads to stimulation of the conversion of apoMTR and aquacob(III)alamin to MTR holoenzyme. This Bos taurus (Bovine) protein is Methionine synthase reductase (MTRR).